A 302-amino-acid polypeptide reads, in one-letter code: Glycine--tRNA ligase alpha subunit (302 aa).

It belongs to the class-II aminoacyl-tRNA synthetase family. Tetramer of two alpha and two beta subunits.

Its subcellular location is the cytoplasm. It catalyses the reaction tRNA(Gly) + glycine + ATP = glycyl-tRNA(Gly) + AMP + diphosphate. The chain is Glycine--tRNA ligase alpha subunit from Haemophilus influenzae (strain PittGG).